We begin with the raw amino-acid sequence, 312 residues long: Adenylyl-sulfate kinase, chloroplastic (312 aa).

142-149 (GLSGSGKS) is a binding site for ATP. Ser-216 serves as the catalytic Phosphoserine intermediate.

This sequence belongs to the APS kinase family.

It localises to the plastid. It is found in the chloroplast. The enzyme catalyses adenosine 5'-phosphosulfate + ATP = 3'-phosphoadenylyl sulfate + ADP + H(+). It functions in the pathway sulfur metabolism; hydrogen sulfide biosynthesis; sulfite from sulfate: step 2/3. Functionally, catalyzes the synthesis of activated sulfate. This Catharanthus roseus (Madagascar periwinkle) protein is Adenylyl-sulfate kinase, chloroplastic (AKN).